The primary structure comprises 437 residues: Adenylosuccinate synthetase 1 (437 aa).

Residues 13–19 and 41–43 contribute to the GTP site; these read GDEGKGK and GHT. The active-site Proton acceptor is the D14. The Mg(2+) site is built by D14 and G41. Residues 14-17, 39-42, T130, R144, Q225, T240, and R310 contribute to the IMP site; these read DEGK and NAGH. The active-site Proton donor is the H42. Residue 306 to 312 participates in substrate binding; sequence ATTGRLR. Residues R312, 338-340, and 421-423 contribute to the GTP site; these read KLD and STG.

Belongs to the adenylosuccinate synthetase family. Homodimer. Mg(2+) serves as cofactor.

It is found in the cytoplasm. The enzyme catalyses IMP + L-aspartate + GTP = N(6)-(1,2-dicarboxyethyl)-AMP + GDP + phosphate + 2 H(+). Its pathway is purine metabolism; AMP biosynthesis via de novo pathway; AMP from IMP: step 1/2. Plays an important role in the de novo pathway of purine nucleotide biosynthesis. Catalyzes the first committed step in the biosynthesis of AMP from IMP. The chain is Adenylosuccinate synthetase 1 from Pseudoalteromonas translucida (strain TAC 125).